We begin with the raw amino-acid sequence, 117 residues long: uncharacterized protein (117 aa).

The tract at residues 1-20 (METKKLIGKPLQPARPVRHL) is disordered.

This is an uncharacterized protein from Homo sapiens (Human).